The primary structure comprises 111 residues: Protein BEX3 (111 aa).

Residues 1–63 are disordered; the sequence is MANIHQENEE…RQINDGMGGD (63 aa). The interaction with p75NTR/NGFR stretch occupies residues 68-93; the sequence is EIFMEEMREIRRKLRELQLRNCLRIL. The interval 68-111 is interaction with 14-3-3 epsilon; sequence EIFMEEMREIRRKLRELQLRNCLRILMGELSNHHDHHDEFCLMP. The short motif at 77-87 is the Nuclear export signal element; the sequence is IRRKLRELQLR. Residues 100 to 104 are his cluster; it reads HHDHH. Cys-108 serves as a coordination point for Zn(2+).

The protein belongs to the BEX family. Self-associates. Binds to the DEATH domain of p75NTR/NGFR. Interacts with 14-3-3 epsilon (YWHAE). Interacts with DIABLO/SMAC. Ubiquitinated. Degraded by the proteasome. As to expression, found in ovarian granulosa cells, testis, prostate and seminal vesicle tissue. High levels also detected in liver.

The protein localises to the nucleus. It localises to the cytoplasm. Its subcellular location is the cytosol. Its function is as follows. May be a signaling adapter molecule involved in NGFR/p75NTR-mediated apoptosis induced by NGF. Plays a role in zinc-triggered neuronal death. In absence of reductive stress, acts as a pseudosubstrate for the CRL2(FEM1B) complex: associates with FEM1B via zinc, thereby preventing association between FEM1B and its substrates. The protein is Protein BEX3 of Homo sapiens (Human).